The chain runs to 121 residues: Large ribosomal subunit protein bL12 (121 aa).

It belongs to the bacterial ribosomal protein bL12 family. Homodimer. Part of the ribosomal stalk of the 50S ribosomal subunit. Forms a multimeric L10(L12)X complex, where L10 forms an elongated spine to which 2 to 4 L12 dimers bind in a sequential fashion. Binds GTP-bound translation factors.

Functionally, forms part of the ribosomal stalk which helps the ribosome interact with GTP-bound translation factors. Is thus essential for accurate translation. The protein is Large ribosomal subunit protein bL12 of Alkaliphilus oremlandii (strain OhILAs) (Clostridium oremlandii (strain OhILAs)).